Reading from the N-terminus, the 529-residue chain is MLRRALASRSSEAAIISTRVSLPRGSIPPPPTSSSSSSSSSREGRRPRFFSTTTTSAERPVDDDEWETVVGLELHVQIGAKTKLFSGAERLYGAEANANVAPFDAALPGSLPAVNARAVELAARLGFALGADVQSRSSFDRKHYHYPDLPHGYQITQQRSPIALGGSLDVFVRDGVSGTLRVERLQLEMDTGKSSKAKSSTLVDLNRAGSTLVEIVTAPDLRGAEEASAAAETFQKVVRFLGVGDANMEEGSMRVDVNVSHRTRDGAVAGERCEVKNLNSFRSIARAVAHERTRQIALLKRGQRVRRQTRSFDPATGATAVLRDKEALLDYRFAPEPDLPPVVIEPAALRAIKAAVPELPSTAAARLTNTAGLAPKLAQTIASKPSTVAYFDACAEAADAWSTRNGTVTVDKQDVANWVTGVLVGAVKRAGVTHKGGAGGEPLRGLPESAGAARVGELLARVAASTSMDSGALEATCAAVVASMPEQLAAYRGGRTRAMGSFVGEVMKRTKGRADPRRAAEIIKTLVDQ.

Positions 17 to 61 (STRVSLPRGSIPPPPTSSSSSSSSSREGRRPRFFSTTTTSAERPV) are disordered.

It belongs to the GatB/GatE family. GatB subfamily. In terms of assembly, subunit of the heterotrimeric GatCAB amidotransferase (AdT) complex, composed of A, B and C subunits.

The protein resides in the mitochondrion. Its subcellular location is the plastid. The protein localises to the chloroplast. The enzyme catalyses L-glutamyl-tRNA(Gln) + L-glutamine + ATP + H2O = L-glutaminyl-tRNA(Gln) + L-glutamate + ADP + phosphate + H(+). Functionally, allows the formation of correctly charged Gln-tRNA(Gln) through the transamidation of misacylated Glu-tRNA(Gln) in chloroplasts and mitochondria. The reaction takes place in the presence of glutamine and ATP through an activated gamma-phospho-Glu-tRNA(Gln). The protein is Glutamyl-tRNA(Gln) amidotransferase subunit B-2, chloroplastic/mitochondrial of Micromonas commoda (strain RCC299 / NOUM17 / CCMP2709) (Picoplanktonic green alga).